The chain runs to 214 residues: External core antigen (214 aa).

Positions Met1–Ala19 are cleaved as a signal peptide. Residues Gly25–Leu27 form an HBEAG region. Residues Asn165–Cys214 form a disordered region. A compositionally biased stretch (basic residues) spans Val178–Ser207. Residues Ser186–Pro192 form a 1; half-length repeat. The interval Ser186–Gln208 is 3 X 8 AA repeats of S-P-R-R-R-R-S-Q. A propeptide spanning residues Ser186–Cys214 is cleaved from the precursor. A run of 2 repeats spans residues Ser193–Gln200 and Ser201–Gln208.

This sequence belongs to the orthohepadnavirus precore antigen family. As to quaternary structure, homodimerizes. Phosphorylated. Post-translationally, cleaved by host furin.

The protein resides in the secreted. It localises to the host nucleus. May regulate immune response to the intracellular capsid in acting as a T-cell tolerogen, by having an immunoregulatory effect which prevents destruction of infected cells by cytotoxic T-cells. This immune regulation may predispose to chronicity during perinatal infections and prevent severe liver injury during adult infections. This Homo sapiens (Human) protein is External core antigen.